We begin with the raw amino-acid sequence, 488 residues long: Pup--protein ligase (488 aa).

Glu34 is a binding site for Mg(2+). Arg77 is an ATP binding site. Position 79 (Tyr79) interacts with Mg(2+). Asp81 (proton acceptor) is an active-site residue. Glu87 provides a ligand contact to Mg(2+). Thr90 and Trp453 together coordinate ATP.

The protein belongs to the Pup ligase/Pup deamidase family. Pup-conjugating enzyme subfamily.

The catalysed reaction is ATP + [prokaryotic ubiquitin-like protein]-L-glutamate + [protein]-L-lysine = ADP + phosphate + N(6)-([prokaryotic ubiquitin-like protein]-gamma-L-glutamyl)-[protein]-L-lysine.. It functions in the pathway protein degradation; proteasomal Pup-dependent pathway. Its pathway is protein modification; protein pupylation. Its function is as follows. Catalyzes the covalent attachment of the prokaryotic ubiquitin-like protein modifier Pup to the proteasomal substrate proteins, thereby targeting them for proteasomal degradation. This tagging system is termed pupylation. The ligation reaction involves the side-chain carboxylate of the C-terminal glutamate of Pup and the side-chain amino group of a substrate lysine. This chain is Pup--protein ligase, found in Bifidobacterium dentium (strain ATCC 27534 / DSM 20436 / JCM 1195 / Bd1).